Reading from the N-terminus, the 397-residue chain is Protein Rep52 (397 aa).

One can recognise an SF3 helicase domain in the interval 84–239 (DPQYAASVFL…LDHDFGKVTK (156 aa)). An ATP-binding site is contributed by 110–117 (GPATTGKT). The interval 265–296 (GGAKKRPAPSDADISEPKRVRESVAQPSTSDA) is disordered.

As to quaternary structure, homooligomer. Interacts with host PRKX.

The protein resides in the host nucleus. Plays a critical role during packaging of viral DNA into empty capsids, where they are thought to be part of the packaging motor complex. The single stranded genomic DNA is packaged in a 3' to 5' direction and requires the association between viral DNA and Rep40. Regulates host PKA activity by interacting with host PRKX as a mechanism to interfere with helper virus propagation and to promote its own replication. The protein is Protein Rep52 (Rep52) of Mammalia (AAV-2).